The chain runs to 317 residues: tRNA dimethylallyltransferase (317 aa).

ATP is bound at residue 14–21 (GPTAVGKT). Substrate is bound at residue 16 to 21 (TAVGKT). The tract at residues 39-42 (DSMQ) is interaction with substrate tRNA.

It belongs to the IPP transferase family. As to quaternary structure, monomer. Mg(2+) is required as a cofactor.

The catalysed reaction is adenosine(37) in tRNA + dimethylallyl diphosphate = N(6)-dimethylallyladenosine(37) in tRNA + diphosphate. Catalyzes the transfer of a dimethylallyl group onto the adenine at position 37 in tRNAs that read codons beginning with uridine, leading to the formation of N6-(dimethylallyl)adenosine (i(6)A). The polypeptide is tRNA dimethylallyltransferase (Bacillus cereus (strain AH820)).